Here is a 159-residue protein sequence, read N- to C-terminus: Ribosomal RNA large subunit methyltransferase H (159 aa).

S-adenosyl-L-methionine is bound by residues leucine 76, glycine 108, and 127 to 132 (FGLLTL).

This sequence belongs to the RNA methyltransferase RlmH family. As to quaternary structure, homodimer.

The protein resides in the cytoplasm. It catalyses the reaction pseudouridine(1915) in 23S rRNA + S-adenosyl-L-methionine = N(3)-methylpseudouridine(1915) in 23S rRNA + S-adenosyl-L-homocysteine + H(+). Specifically methylates the pseudouridine at position 1915 (m3Psi1915) in 23S rRNA. The chain is Ribosomal RNA large subunit methyltransferase H from Streptococcus pyogenes serotype M3 (strain SSI-1).